Consider the following 310-residue polypeptide: Methionyl-tRNA formyltransferase (310 aa).

(6S)-5,6,7,8-tetrahydrofolate is bound at residue 109–112 (SLLP).

It belongs to the Fmt family.

The catalysed reaction is L-methionyl-tRNA(fMet) + (6R)-10-formyltetrahydrofolate = N-formyl-L-methionyl-tRNA(fMet) + (6S)-5,6,7,8-tetrahydrofolate + H(+). Attaches a formyl group to the free amino group of methionyl-tRNA(fMet). The formyl group appears to play a dual role in the initiator identity of N-formylmethionyl-tRNA by promoting its recognition by IF2 and preventing the misappropriation of this tRNA by the elongation apparatus. The sequence is that of Methionyl-tRNA formyltransferase from Pseudomonas putida (strain ATCC 47054 / DSM 6125 / CFBP 8728 / NCIMB 11950 / KT2440).